The chain runs to 62 residues: Large ribosomal subunit protein bL32 (62 aa).

The segment covering 1-16 (MAVPKRKTSPMKRGFR) has biased composition (basic residues). Residues 1–62 (MAVPKRKTSP…QILTPKNKEA (62 aa)) form a disordered region. Positions 28-44 (VEDKDSGELRRPHHVDL) are enriched in basic and acidic residues.

This sequence belongs to the bacterial ribosomal protein bL32 family.

The chain is Large ribosomal subunit protein bL32 from Methylocella silvestris (strain DSM 15510 / CIP 108128 / LMG 27833 / NCIMB 13906 / BL2).